We begin with the raw amino-acid sequence, 31 residues long: Cytochrome b6-f complex subunit 6 (31 aa).

Residues 4–24 form a helical membrane-spanning segment; it reads ITSYFGFLLAALTITSALLIG.

This sequence belongs to the PetL family. In terms of assembly, the 4 large subunits of the cytochrome b6-f complex are cytochrome b6, subunit IV (17 kDa polypeptide, PetD), cytochrome f and the Rieske protein, while the 4 small subunits are PetG, PetL, PetM and PetN. The complex functions as a dimer.

It localises to the plastid. The protein resides in the chloroplast thylakoid membrane. Its function is as follows. Component of the cytochrome b6-f complex, which mediates electron transfer between photosystem II (PSII) and photosystem I (PSI), cyclic electron flow around PSI, and state transitions. PetL is important for photoautotrophic growth as well as for electron transfer efficiency and stability of the cytochrome b6-f complex. The protein is Cytochrome b6-f complex subunit 6 of Piper cenocladum (Ant piper).